Consider the following 1104-residue polypeptide: Carbamoyl phosphate synthase large chain (1104 aa).

The interval 1 to 403 (MPRRQDIQKI…SFQKALRSLE (403 aa)) is carboxyphosphate synthetic domain. Positions 129, 170, 176, 177, 209, 211, 216, 242, 243, 244, 286, and 300 each coordinate ATP. The 197-residue stretch at 133 to 329 (NEAMDKIGVK…IAKMAAKLAV (197 aa)) folds into the ATP-grasp 1 domain. Glutamine 286, glutamate 300, and asparagine 302 together coordinate Mg(2+). Positions 286, 300, and 302 each coordinate Mn(2+). The interval 404–552 (TGRAGWGCDK…YSTYEEETEV (149 aa)) is oligomerization domain. Positions 553–966 (IPASKPKVMI…AFAKAELGAG (414 aa)) are carbamoyl phosphate synthetic domain. Positions 703–900 (EKILQKLNIS…LAKLASLIMS (198 aa)) constitute an ATP-grasp 2 domain. Residues arginine 739, lysine 778, leucine 780, glutamate 785, glycine 811, isoleucine 812, histidine 813, serine 814, glutamine 854, and glutamate 871 each contribute to the ATP site. Residues glutamine 854, glutamate 871, and asparagine 873 each contribute to the Mg(2+) site. The Mn(2+) site is built by glutamine 854, glutamate 871, and asparagine 873. An MGS-like domain is found at 967-1104 (ERLPLTGTVF…KTIQEYCPNF (138 aa)). The interval 967–1104 (ERLPLTGTVF…KTIQEYCPNF (138 aa)) is allosteric domain.

The protein belongs to the CarB family. As to quaternary structure, composed of two chains; the small (or glutamine) chain promotes the hydrolysis of glutamine to ammonia, which is used by the large (or ammonia) chain to synthesize carbamoyl phosphate. Tetramer of heterodimers (alpha,beta)4. Mg(2+) is required as a cofactor. It depends on Mn(2+) as a cofactor.

The enzyme catalyses hydrogencarbonate + L-glutamine + 2 ATP + H2O = carbamoyl phosphate + L-glutamate + 2 ADP + phosphate + 2 H(+). It catalyses the reaction hydrogencarbonate + NH4(+) + 2 ATP = carbamoyl phosphate + 2 ADP + phosphate + 2 H(+). Its pathway is amino-acid biosynthesis; L-arginine biosynthesis; carbamoyl phosphate from bicarbonate: step 1/1. It participates in pyrimidine metabolism; UMP biosynthesis via de novo pathway; (S)-dihydroorotate from bicarbonate: step 1/3. Its function is as follows. Large subunit of the glutamine-dependent carbamoyl phosphate synthetase (CPSase). CPSase catalyzes the formation of carbamoyl phosphate from the ammonia moiety of glutamine, carbonate, and phosphate donated by ATP, constituting the first step of 2 biosynthetic pathways, one leading to arginine and/or urea and the other to pyrimidine nucleotides. The large subunit (synthetase) binds the substrates ammonia (free or transferred from glutamine from the small subunit), hydrogencarbonate and ATP and carries out an ATP-coupled ligase reaction, activating hydrogencarbonate by forming carboxy phosphate which reacts with ammonia to form carbamoyl phosphate. This chain is Carbamoyl phosphate synthase large chain, found in Nostoc sp. (strain PCC 7120 / SAG 25.82 / UTEX 2576).